The sequence spans 101 residues: MAKVALIQRELKREKLAAKYAAKYAELKAIAADAKRSDEERDAARLGLQKLPRNANPTRQRNRCEITGRPRGTFRQFGLGRAKIRELAFAGDIPGVTKASW.

This sequence belongs to the universal ribosomal protein uS14 family. As to quaternary structure, part of the 30S ribosomal subunit. Contacts proteins S3 and S10.

Functionally, binds 16S rRNA, required for the assembly of 30S particles and may also be responsible for determining the conformation of the 16S rRNA at the A site. The sequence is that of Small ribosomal subunit protein uS14 from Delftia acidovorans (strain DSM 14801 / SPH-1).